Here is a 251-residue protein sequence, read N- to C-terminus: Large ribosomal subunit protein uL3 (251 aa).

N5-methylglutamine is present on Gln151. Residues 219–251 (PGAFRRNGEEAAAAPAAEAPAETPAEEAGQEGA) are disordered. Positions 228–241 (EAAAAPAAEAPAET) are enriched in low complexity. Residues 242–251 (PAEEAGQEGA) are compositionally biased toward acidic residues.

It belongs to the universal ribosomal protein uL3 family. As to quaternary structure, part of the 50S ribosomal subunit. Forms a cluster with proteins L14 and L19. In terms of processing, methylated by PrmB.

One of the primary rRNA binding proteins, it binds directly near the 3'-end of the 23S rRNA, where it nucleates assembly of the 50S subunit. The protein is Large ribosomal subunit protein uL3 of Parvibaculum lavamentivorans (strain DS-1 / DSM 13023 / NCIMB 13966).